An 841-amino-acid chain; its full sequence is DNA mismatch repair protein MutS (841 aa).

596–603 (GPNMSGKS) is an ATP binding site.

Belongs to the DNA mismatch repair MutS family.

Its function is as follows. This protein is involved in the repair of mismatches in DNA. It is possible that it carries out the mismatch recognition step. This protein has a weak ATPase activity. The sequence is that of DNA mismatch repair protein MutS from Acholeplasma laidlawii (strain PG-8A).